The following is a 227-amino-acid chain: UPF0758 protein Pcryo_2119 (227 aa).

In terms of domain architecture, MPN spans 102 to 224; sequence GLGRSQMVKD…TLSYAENSLP (123 aa). Zn(2+) contacts are provided by histidine 173, histidine 175, and aspartate 186. Residues 173–186 carry the JAMM motif motif; the sequence is HNHPHTDAKPSTAD.

It belongs to the UPF0758 family.

The chain is UPF0758 protein Pcryo_2119 from Psychrobacter cryohalolentis (strain ATCC BAA-1226 / DSM 17306 / VKM B-2378 / K5).